We begin with the raw amino-acid sequence, 117 residues long: Minor capsid protein p17 (117 aa).

The N-linked (GlcNAc...) asparagine; by host glycan is linked to asparagine 12. The chain crosses the membrane as a helical span at residues 39–59 (AIILGILILLVIILIVVAIVY). N-linked (GlcNAc...) asparagine; by host glycans are attached at residues asparagine 61 and asparagine 98. The tract at residues 97–117 (KNSTTQQHIPSDEQLAELAHS) is disordered.

Belongs to the asfivirus minor capsid protein p17 family. Interacts with the minor capsid protein M1249L and with the hexon capsid protein p72 capsomers; these interactions form a rigid zipper structure that stabilizes the capsomers. Interacts with host STING1.

Its subcellular location is the virion membrane. It localises to the host endoplasmic reticulum membrane. Its function is as follows. Together with the penton and the other minor capsid proteins (M1249L, p49), forms a complicated network immediately below the outer capsid shell, stabilizing the whole capsid. Three copies of p17 encircle each p72 capsomer in the inner capsid shell, anchoring p72 capsomers on the inner membrane. Required for the assembly of the capsid and icosahedral morphogenesis. Additionally, inhibits the host cGAS-STING pathway through its interaction with STING1 and subsequent interference of the recruitment of downstream components TBK1 and IKBKE. This Ornithodoros (relapsing fever ticks) protein is Minor capsid protein p17.